Consider the following 539-residue polypeptide: BTB/POZ domain-containing protein 6 (539 aa).

Residues methionine 1–alanine 23 form the signal peptide. Residues alanine 137–alanine 207 enclose the BTB domain.

Its subcellular location is the cytoplasm. Adapter protein for the cul3 E3 ubiquitin-protein ligase complex. Involved in late neuronal development and muscle formation. The chain is BTB/POZ domain-containing protein 6 (Btbd6) from Mus musculus (Mouse).